The following is a 919-amino-acid chain: TRPM8 channel-associated factor 2 (919 aa).

The Peptidase M60 domain maps to 542–841 (DCWVSTGLYL…TYLQLQEAFG (300 aa)).

This sequence belongs to the TCAF family. As to quaternary structure, isoform 2 interacts with TRPM8 (via N-terminus and C-terminus domains); the interaction inhibits TRPM8 channel activity. Interacts with TRPV6. Isoform 2 is expressed in the prostate and in cancerous prostate samples.

It localises to the cell membrane. Functionally, negatively regulates the plasma membrane cation channel TRPM8 activity. Involved in the recruitment of TRPM8 to the cell surface. Promotes prostate cancer cell migration stimulation in a TRPM8-dependent manner. This chain is TRPM8 channel-associated factor 2, found in Homo sapiens (Human).